Consider the following 450-residue polypeptide: Probable ECA polymerase (450 aa).

A run of 11 helical transmembrane segments spans residues 6 to 26 (FSGL…LTWF), 37 to 57 (VFFS…TSVL), 63 to 83 (VGVA…CFYA), 118 to 138 (VILM…NGFL), 155 to 175 (GVAL…VYFL), 181 to 201 (AWLF…MIVG), 207 to 227 (IIIA…ISLW), 228 to 248 (MLAA…LKRY), 341 to 361 (LVVM…GLII), 378 to 398 (YKAA…IVLA), and 410 to 430 (VFFI…YWLF).

The protein belongs to the WzyE family. As to quaternary structure, probably part of a complex composed of WzxE, WzyE and WzzE.

The protein localises to the cell inner membrane. It functions in the pathway bacterial outer membrane biogenesis; enterobacterial common antigen biosynthesis. Probably involved in the polymerization of enterobacterial common antigen (ECA) trisaccharide repeat units. In Shigella boydii serotype 18 (strain CDC 3083-94 / BS512), this protein is Probable ECA polymerase.